The sequence spans 250 residues: 5-oxoprolinase subunit A (250 aa).

This sequence belongs to the LamB/PxpA family. In terms of assembly, forms a complex composed of PxpA, PxpB and PxpC.

It carries out the reaction 5-oxo-L-proline + ATP + 2 H2O = L-glutamate + ADP + phosphate + H(+). Its function is as follows. Catalyzes the cleavage of 5-oxoproline to form L-glutamate coupled to the hydrolysis of ATP to ADP and inorganic phosphate. This chain is 5-oxoprolinase subunit A, found in Paraburkholderia phymatum (strain DSM 17167 / CIP 108236 / LMG 21445 / STM815) (Burkholderia phymatum).